We begin with the raw amino-acid sequence, 30 residues long: Dendrotoxin A (30 aa).

A disulfide bridge connects residues Cys3 and Cys22.

This sequence belongs to the three-finger toxin family. Short-chain subfamily. Acn-esterase inhibitor sub-subfamily. Post-translationally, contains 4 disulfide bonds. Expressed by the venom gland.

It localises to the secreted. Functionally, inhibits acetylcholinesterase. Has been described to inhibit both the slowly and the rapidly inactivating phases of potassium efflux. This Dendroaspis angusticeps (Eastern green mamba) protein is Dendrotoxin A.